We begin with the raw amino-acid sequence, 384 residues long: PqqA peptide cyclase (384 aa).

Residues 5–220 (VGLPLWLLAE…TNEYREKLKA (216 aa)) form the Radical SAM core domain. [4Fe-4S] cluster contacts are provided by C19, C23, and C26.

The protein belongs to the radical SAM superfamily. PqqE family. Interacts with PqqD. The interaction is necessary for activity of PqqE. The cofactor is [4Fe-4S] cluster.

The enzyme catalyses [PQQ precursor protein] + S-adenosyl-L-methionine = E-Y cross-linked-[PQQ precursor protein] + 5'-deoxyadenosine + L-methionine + H(+). It participates in cofactor biosynthesis; pyrroloquinoline quinone biosynthesis. Its function is as follows. Catalyzes the cross-linking of a glutamate residue and a tyrosine residue in the PqqA protein as part of the biosynthesis of pyrroloquinoline quinone (PQQ). This is PqqA peptide cyclase from Acinetobacter baumannii (strain SDF).